Here is a 209-residue protein sequence, read N- to C-terminus: dTTP/UTP pyrophosphatase (209 aa).

The active-site Proton acceptor is the Asp79.

Belongs to the Maf family. YhdE subfamily. A divalent metal cation is required as a cofactor.

The protein localises to the cytoplasm. The catalysed reaction is dTTP + H2O = dTMP + diphosphate + H(+). It catalyses the reaction UTP + H2O = UMP + diphosphate + H(+). Nucleoside triphosphate pyrophosphatase that hydrolyzes dTTP and UTP. May have a dual role in cell division arrest and in preventing the incorporation of modified nucleotides into cellular nucleic acids. The polypeptide is dTTP/UTP pyrophosphatase (Chelativorans sp. (strain BNC1)).